We begin with the raw amino-acid sequence, 446 residues long: NADH oxidase (446 aa).

Residues 7 to 11, Glu32, Cys42, Val79, 110 to 113, Lys132, and Tyr157 each bind FAD; these read GCTHA and TTGS. The active-site Proton acceptor is the His10. The active-site Redox-active is the Cys42. Position 42 is a cysteine sulfinic acid (-SO2H) (Cys42). Residues 150 to 165, Asp177, Tyr186, and Gly243 each bind NAD(+); that span reads VVVVGGGYIGIELVEA. FAD is bound by residues 271-281, Leu298, Ala299, and Thr300; that span reads TSNPDIFAAGD. Gly328 lines the NAD(+) pocket. Phe424 is an FAD binding site.

It belongs to the class-III pyridine nucleotide-disulfide oxidoreductase family. In terms of assembly, homodimer. FAD is required as a cofactor. Post-translationally, the N-terminus is blocked.

The enzyme catalyses 2 NADH + O2 + 2 H(+) = 2 NAD(+) + 2 H2O. Its function is as follows. Catalyzes the four-electron reduction of molecular oxygen to water. This chain is NADH oxidase (nox), found in Enterococcus faecalis (strain ATCC 700802 / V583).